The chain runs to 129 residues: Iron-sulfur cluster assembly 1 homolog, mitochondrial (129 aa).

The N-terminal 12 residues, 1-12 (MSASLVRATVRA), are a transit peptide targeting the mitochondrion. Residues C57, C121, and C123 each contribute to the Fe cation site.

The protein belongs to the HesB/IscA family. As to quaternary structure, interacts with CRY2, but not with CRY1 (in vitro).

It localises to the mitochondrion. In terms of biological role, involved in the maturation of mitochondrial 4Fe-4S proteins functioning late in the iron-sulfur cluster assembly pathway. Probably involved in the binding of an intermediate of Fe/S cluster assembly. The polypeptide is Iron-sulfur cluster assembly 1 homolog, mitochondrial (Isca1) (Rattus norvegicus (Rat)).